Reading from the N-terminus, the 121-residue chain is uncharacterized protein (121 aa).

A disordered region spans residues 100–121 (KSFSNTKDGKKNDDDNNSSSKS).

This is an uncharacterized protein from Mycoplasma pneumoniae (strain ATCC 29342 / M129 / Subtype 1) (Mycoplasmoides pneumoniae).